Consider the following 78-residue polypeptide: MSAHCQVTGRQPSFGKSVSHSHRRTSRRWNPNVQRRKFFVPSMGRTITLTVSTKGLKVIDRDGIEAVVAQIRARGEKI.

Residues 1-29 (MSAHCQVTGRQPSFGKSVSHSHRRTSRRW) form a disordered region.

Belongs to the bacterial ribosomal protein bL28 family.

The polypeptide is Large ribosomal subunit protein bL28 (Corynebacterium efficiens (strain DSM 44549 / YS-314 / AJ 12310 / JCM 11189 / NBRC 100395)).